A 691-amino-acid polypeptide reads, in one-letter code: MPRTHAIEDYRNFGIMAHIDAGKTTTTERILYYTGKSHKIGEVHDGAATMDWMTQEQERGITITSAATTAIWAGKRLNIIDTPGHVDFTIEVERSLRVLDGAVCVLDGNQGVEPQTETVWRQADKYNVPRIVFVNKMDKIGADFYRCVEMIVDRVAGNPVCCQLPIGSENNFKGVIDLVRMKAVVWEDEALGAKYHDEEIPADLADKAAEYRNKLVEAAVELDDDAMTAYLDGVEPDVATLKSLIRKAVIGRKFNPVFCGSAFKNKGVQPLLDAVVDFLPSPIDRGAIKGIDFKTEEDTVRMPSDDEPTSVLAFKIMDDPFVGTITFCRVYAGKMETGMGLLNSTRDKRERVGRMLLMHANNREDIKEAYAGDIVALAGLKDVRTGDTLCDPAKAVILEKMEFPEPVIEIAIEPKSKADQEKLGIALSKLAAEDPSFRVSTDFESGQTILKGMGELHLDIKVDILKRTYKVDANIGAPQVAYRETITKKYEVDYTHKKQTGGTGQFARVKFIVEPNEVGKGFVFESAIVGGAVPKEYIPGVQKGLESVLGAGVLAGFPVVDVKVQLIDGAFHEVDSSALAFEIASRAAFREALQKGSPVLLEPIMKVEVVTPEDYTGSVIGDLNSRRGQIQGQDMRGNANVVNAMVPLANMFGYVNTLRSFSQGRATFTMQFDHYEQVPSNVAQEVQAKYA.

The tr-type G domain occupies 8–283; that stretch reads EDYRNFGIMA…AVVDFLPSPI (276 aa). Residues 17-24, 81-85, and 135-138 contribute to the GTP site; these read AHIDAGKT, DTPGH, and NKMD.

Belongs to the TRAFAC class translation factor GTPase superfamily. Classic translation factor GTPase family. EF-G/EF-2 subfamily.

Its subcellular location is the cytoplasm. In terms of biological role, catalyzes the GTP-dependent ribosomal translocation step during translation elongation. During this step, the ribosome changes from the pre-translocational (PRE) to the post-translocational (POST) state as the newly formed A-site-bound peptidyl-tRNA and P-site-bound deacylated tRNA move to the P and E sites, respectively. Catalyzes the coordinated movement of the two tRNA molecules, the mRNA and conformational changes in the ribosome. In Xanthobacter autotrophicus (strain ATCC BAA-1158 / Py2), this protein is Elongation factor G.